Here is a 249-residue protein sequence, read N- to C-terminus: Phosphatidylglycerol--prolipoprotein diacylglyceryl transferase (249 aa).

Helical transmembrane passes span 11 to 31 (LKIYGYGAMIALGILAAVILL), 49 to 69 (AIVGIIGGILGGKLLYIIVDI), 82 to 102 (LGNGFVIYGAIIGGAISVYLY), 116 to 136 (LVVPSVALAQGFGRIGCFLAG), 163 to 183 (LHPTQIYSSIFDFLLAFFLLW), 192 to 212 (GRVFSLYVIIYGVGRVIVEFL), and 223 to 243 (LSTSQFISLFTIIIGIFVFNI). Residue Arg129 coordinates a 1,2-diacyl-sn-glycero-3-phospho-(1'-sn-glycerol).

Belongs to the Lgt family.

Its subcellular location is the cell membrane. The catalysed reaction is L-cysteinyl-[prolipoprotein] + a 1,2-diacyl-sn-glycero-3-phospho-(1'-sn-glycerol) = an S-1,2-diacyl-sn-glyceryl-L-cysteinyl-[prolipoprotein] + sn-glycerol 1-phosphate + H(+). It participates in protein modification; lipoprotein biosynthesis (diacylglyceryl transfer). Catalyzes the transfer of the diacylglyceryl group from phosphatidylglycerol to the sulfhydryl group of the N-terminal cysteine of a prolipoprotein, the first step in the formation of mature lipoproteins. This chain is Phosphatidylglycerol--prolipoprotein diacylglyceryl transferase, found in Clostridium tetani (strain Massachusetts / E88).